A 198-amino-acid polypeptide reads, in one-letter code: Probable GTP-binding protein EngB (198 aa).

The region spanning 22-197 is the EngB-type G domain; it reads TLPEYAFIGR…LDYIEGINNS (176 aa). GTP is bound by residues 30–37, 57–61, 75–78, 142–145, and 175–178; these read GRSNVGKS, GKTQL, DLPG, TKAD, and ITSA. Mg(2+)-binding residues include serine 37 and threonine 59.

This sequence belongs to the TRAFAC class TrmE-Era-EngA-EngB-Septin-like GTPase superfamily. EngB GTPase family. Mg(2+) serves as cofactor.

Functionally, necessary for normal cell division and for the maintenance of normal septation. This is Probable GTP-binding protein EngB from Christiangramia forsetii (strain DSM 17595 / CGMCC 1.15422 / KT0803) (Gramella forsetii).